The following is a 178-amino-acid chain: Putative type II secretion system M-type protein YghD (178 aa).

Over 1–39 (MLRDKFIHYFQQWRERQLSRGEHWLAQHLAGRSPREKGM) the chain is Cytoplasmic. The chain crosses the membrane as a helical span at residues 40-60 (LLAAVVFLFSVGYYVLIWQPL). Residues 61–178 (SERIEQQETI…NVQRLEFGRG (118 aa)) are Periplasmic-facing.

The protein belongs to the GSP M family.

It localises to the cell inner membrane. In terms of biological role, involved in a type II secretion system (T2SS, formerly general secretion pathway, GSP) for the export of folded proteins across the outer membrane. This Escherichia coli (strain K12) protein is Putative type II secretion system M-type protein YghD (yghD).